The following is a 208-amino-acid chain: Putative 3-methyladenine DNA glycosylase (208 aa).

This sequence belongs to the DNA glycosylase MPG family.

In Lactobacillus johnsonii (strain CNCM I-12250 / La1 / NCC 533), this protein is Putative 3-methyladenine DNA glycosylase.